A 396-amino-acid polypeptide reads, in one-letter code: Elongation factor Tu (396 aa).

The 196-residue stretch at 10 to 205 (KPHVNIGTIG…ACDDSIPDPE (196 aa)) folds into the tr-type G domain. The G1 stretch occupies residues 19-26 (GHVDHGKT). GTP is bound at residue 19-26 (GHVDHGKT). Residue threonine 26 participates in Mg(2+) binding. The interval 62 to 66 (GITIN) is G2. The G3 stretch occupies residues 83–86 (DAPG). GTP contacts are provided by residues 83-87 (DAPGH) and 138-141 (NKCD). Residues 138-141 (NKCD) form a G4 region. A G5 region spans residues 175–177 (SAL).

This sequence belongs to the TRAFAC class translation factor GTPase superfamily. Classic translation factor GTPase family. EF-Tu/EF-1A subfamily. In terms of assembly, monomer.

Its subcellular location is the cytoplasm. The catalysed reaction is GTP + H2O = GDP + phosphate + H(+). In terms of biological role, GTP hydrolase that promotes the GTP-dependent binding of aminoacyl-tRNA to the A-site of ribosomes during protein biosynthesis. This is Elongation factor Tu from Corynebacterium aurimucosum (strain ATCC 700975 / DSM 44827 / CIP 107346 / CN-1) (Corynebacterium nigricans).